The chain runs to 494 residues: Cysteine--tRNA ligase (494 aa).

Cysteine 29 lines the Zn(2+) pocket. Positions 31–41 (VTVYDHCHIGH) match the 'HIGH' region motif. Zn(2+) contacts are provided by cysteine 209, histidine 234, and glutamate 238. A 'KMSKS' region motif is present at residues 266-270 (KMSKS). Lysine 269 lines the ATP pocket.

This sequence belongs to the class-I aminoacyl-tRNA synthetase family. Monomer. Zn(2+) serves as cofactor.

Its subcellular location is the cytoplasm. The enzyme catalyses tRNA(Cys) + L-cysteine + ATP = L-cysteinyl-tRNA(Cys) + AMP + diphosphate. This is Cysteine--tRNA ligase from Geotalea daltonii (strain DSM 22248 / JCM 15807 / FRC-32) (Geobacter daltonii).